Reading from the N-terminus, the 400-residue chain is CCA-adding enzyme (400 aa).

Positions 28 and 31 each coordinate ATP. Residues Gly-28 and Arg-31 each contribute to the CTP site. Mg(2+) contacts are provided by Asp-41 and Asp-43. The ATP site is built by Arg-112, Asp-155, Arg-158, Arg-161, and Arg-164. CTP-binding residues include Arg-112, Asp-155, Arg-158, Arg-161, and Arg-164.

The protein belongs to the tRNA nucleotidyltransferase/poly(A) polymerase family. Bacterial CCA-adding enzyme type 3 subfamily. In terms of assembly, homodimer. The cofactor is Mg(2+).

It catalyses the reaction a tRNA precursor + 2 CTP + ATP = a tRNA with a 3' CCA end + 3 diphosphate. The enzyme catalyses a tRNA with a 3' CCA end + 2 CTP + ATP = a tRNA with a 3' CCACCA end + 3 diphosphate. Functionally, catalyzes the addition and repair of the essential 3'-terminal CCA sequence in tRNAs without using a nucleic acid template. Adds these three nucleotides in the order of C, C, and A to the tRNA nucleotide-73, using CTP and ATP as substrates and producing inorganic pyrophosphate. tRNA 3'-terminal CCA addition is required both for tRNA processing and repair. Also involved in tRNA surveillance by mediating tandem CCA addition to generate a CCACCA at the 3' terminus of unstable tRNAs. While stable tRNAs receive only 3'-terminal CCA, unstable tRNAs are marked with CCACCA and rapidly degraded. The sequence is that of CCA-adding enzyme from Staphylococcus epidermidis (strain ATCC 12228 / FDA PCI 1200).